The sequence spans 88 residues: MIDKKQKQKIVSEFGKNEGDTGSVGVQIALITGRIKYLTEHLKINKKDHSSKRGLLKLVGQRRSLLQYYQKKDLEAYRALISKLGLRK.

The protein belongs to the universal ribosomal protein uS15 family. Part of the 30S ribosomal subunit. Forms a bridge to the 50S subunit in the 70S ribosome, contacting the 23S rRNA.

One of the primary rRNA binding proteins, it binds directly to 16S rRNA where it helps nucleate assembly of the platform of the 30S subunit by binding and bridging several RNA helices of the 16S rRNA. Functionally, forms an intersubunit bridge (bridge B4) with the 23S rRNA of the 50S subunit in the ribosome. The sequence is that of Small ribosomal subunit protein uS15 from Borreliella afzelii (strain PKo) (Borrelia afzelii).